Reading from the N-terminus, the 463-residue chain is L-2-hydroxyglutarate dehydrogenase, mitochondrial (463 aa).

The transit peptide at 1 to 52 (MVPALRYLGSVCGRARGIFPGGFSAAHTPASGKSRLLCQGGRRASTSSFDIV) directs the protein to the mitochondrion. N6-acetyllysine is present on residues K104 and K173.

The protein belongs to the L2HGDH family. It depends on FAD as a cofactor.

It localises to the mitochondrion. It carries out the reaction (S)-2-hydroxyglutarate + A = 2-oxoglutarate + AH2. The protein is L-2-hydroxyglutarate dehydrogenase, mitochondrial (L2HGDH) of Bos taurus (Bovine).